Consider the following 197-residue polypeptide: uncharacterized protein (197 aa).

The chain crosses the membrane as a helical span at residues leucine 103 to leucine 123.

Its subcellular location is the host membrane. This is an uncharacterized protein from Equus caballus (Horse).